Reading from the N-terminus, the 253-residue chain is UPF0280 protein MA_1715 (253 aa).

It belongs to the UPF0280 family.

This is UPF0280 protein MA_1715 from Methanosarcina acetivorans (strain ATCC 35395 / DSM 2834 / JCM 12185 / C2A).